We begin with the raw amino-acid sequence, 208 residues long: ATP-dependent Clp protease proteolytic subunit (208 aa).

Serine 107 (nucleophile) is an active-site residue. The active site involves histidine 132.

It belongs to the peptidase S14 family. Fourteen ClpP subunits assemble into 2 heptameric rings which stack back to back to give a disk-like structure with a central cavity, resembling the structure of eukaryotic proteasomes.

The protein localises to the cytoplasm. It carries out the reaction Hydrolysis of proteins to small peptides in the presence of ATP and magnesium. alpha-casein is the usual test substrate. In the absence of ATP, only oligopeptides shorter than five residues are hydrolyzed (such as succinyl-Leu-Tyr-|-NHMec, and Leu-Tyr-Leu-|-Tyr-Trp, in which cleavage of the -Tyr-|-Leu- and -Tyr-|-Trp bonds also occurs).. Functionally, cleaves peptides in various proteins in a process that requires ATP hydrolysis. Has a chymotrypsin-like activity. Plays a major role in the degradation of misfolded proteins. The chain is ATP-dependent Clp protease proteolytic subunit from Methylorubrum extorquens (strain CM4 / NCIMB 13688) (Methylobacterium extorquens).